The primary structure comprises 151 residues: Ribosome maturation factor RimP (151 aa).

This sequence belongs to the RimP family.

The protein localises to the cytoplasm. Functionally, required for maturation of 30S ribosomal subunits. In Shewanella baltica (strain OS223), this protein is Ribosome maturation factor RimP.